An 86-amino-acid chain; its full sequence is Small ribosomal subunit protein uS15c (86 aa).

This sequence belongs to the universal ribosomal protein uS15 family. Part of the 30S ribosomal subunit.

It localises to the plastid. The sequence is that of Small ribosomal subunit protein uS15c (rps15) from Cuscuta gronovii (Common dodder).